A 330-amino-acid chain; its full sequence is 4-hydroxythreonine-4-phosphate dehydrogenase (330 aa).

Thr-133 provides a ligand contact to substrate. Positions 161, 206, and 261 each coordinate a divalent metal cation. Substrate contacts are provided by Lys-269, Asn-278, and Arg-287.

Belongs to the PdxA family. As to quaternary structure, homodimer. Zn(2+) serves as cofactor. Requires Mg(2+) as cofactor. The cofactor is Co(2+).

It is found in the cytoplasm. The catalysed reaction is 4-(phosphooxy)-L-threonine + NAD(+) = 3-amino-2-oxopropyl phosphate + CO2 + NADH. It functions in the pathway cofactor biosynthesis; pyridoxine 5'-phosphate biosynthesis; pyridoxine 5'-phosphate from D-erythrose 4-phosphate: step 4/5. Functionally, catalyzes the NAD(P)-dependent oxidation of 4-(phosphooxy)-L-threonine (HTP) into 2-amino-3-oxo-4-(phosphooxy)butyric acid which spontaneously decarboxylates to form 3-amino-2-oxopropyl phosphate (AHAP). The chain is 4-hydroxythreonine-4-phosphate dehydrogenase from Xylella fastidiosa (strain 9a5c).